A 287-amino-acid polypeptide reads, in one-letter code: Large ribosomal subunit protein uL2 (287 aa).

The segment at 221–287 (RGSVMNPCDH…SKRSRGGRDS (67 aa)) is disordered. Positions 258 to 287 (KTRKKNKPSNKLVVRRRRRVSKRSRGGRDS) are enriched in basic residues.

The protein belongs to the universal ribosomal protein uL2 family. As to quaternary structure, part of the 50S ribosomal subunit. Forms a bridge to the 30S subunit in the 70S ribosome.

In terms of biological role, one of the primary rRNA binding proteins. Required for association of the 30S and 50S subunits to form the 70S ribosome, for tRNA binding and peptide bond formation. It has been suggested to have peptidyltransferase activity; this is somewhat controversial. Makes several contacts with the 16S rRNA in the 70S ribosome. This is Large ribosomal subunit protein uL2 from Prochlorococcus marinus (strain AS9601).